A 361-amino-acid polypeptide reads, in one-letter code: Phosphate acyltransferase (361 aa).

This sequence belongs to the PlsX family. As to quaternary structure, homodimer. Probably interacts with PlsY.

The protein resides in the cytoplasm. The enzyme catalyses a fatty acyl-[ACP] + phosphate = an acyl phosphate + holo-[ACP]. It functions in the pathway lipid metabolism; phospholipid metabolism. Its function is as follows. Catalyzes the reversible formation of acyl-phosphate (acyl-PO(4)) from acyl-[acyl-carrier-protein] (acyl-ACP). This enzyme utilizes acyl-ACP as fatty acyl donor, but not acyl-CoA. The sequence is that of Phosphate acyltransferase from Parvibaculum lavamentivorans (strain DS-1 / DSM 13023 / NCIMB 13966).